A 406-amino-acid chain; its full sequence is Zinc finger protein 57 (406 aa).

The region spanning 17–88 (VRYEDVAVSF…TCTGVFKGGP (72 aa)) is the KRAB domain. The interval 57–77 (ESKKKPQEPNPNLKDKDDDKS) is disordered. Residues 90 to 113 (FFCLTCGKCFKKNTFLFNHQFPVR) form a C2H2-type 1; degenerate zinc finger. C2H2-type zinc fingers lie at residues 140–162 (FFCNLCGKTYRDASGLSRHRRAH) and 168–190 (RSCPECGKCFRDQSEVNRHLKVH). The segment at 194–226 (KPVAGSHVKVHQNKPVASNQKQKGRVPPTTRES) is disordered. The C2H2-type 4 zinc-finger motif lies at 270–292 (VYCPYCRITFTMRTCLLNHLKIH). The C2H2-type 5; degenerate zinc finger occupies 318–337 (YNCPVCDSSFRGKESLLNHL). The interval 372 to 406 (SRKRRRKRISSDSSETEGPSGSDEVMEVDTDSDLS) is disordered. Acidic residues predominate over residues 395 to 406 (EVMEVDTDSDLS).

The protein belongs to the krueppel C2H2-type zinc-finger protein family. As to expression, expressed in oligodendrocytes and at lower levels in astrocytes.

It is found in the nucleus. Its function is as follows. Transcription regulator required to maintain maternal and paternal gene imprinting, a process by which gene expression is restricted in a parent of origin-specific manner by epigenetic modification of genomic DNA and chromatin, including DNA methylation. Acts by controlling DNA methylation during the earliest multicellular stages of development at multiple imprinting control regions (ICRs). Acts together with ZNF445. Required for the establishment of maternal methylation imprints at SNRPN locus. Acts as a transcriptional repressor in Schwann cells. Binds to a 5'-TGCCGC-3' consensus sequence and recognizes the methylated CpG within this element. The protein is Zinc finger protein 57 (Zfp57) of Rattus norvegicus (Rat).